Consider the following 293-residue polypeptide: Urease accessory protein UreD 2 (293 aa).

The protein belongs to the UreD family. In terms of assembly, ureD, UreF and UreG form a complex that acts as a GTP-hydrolysis-dependent molecular chaperone, activating the urease apoprotein by helping to assemble the nickel containing metallocenter of UreC. The UreE protein probably delivers the nickel.

It localises to the cytoplasm. In terms of biological role, required for maturation of urease via the functional incorporation of the urease nickel metallocenter. The sequence is that of Urease accessory protein UreD 2 from Streptomyces griseus subsp. griseus (strain JCM 4626 / CBS 651.72 / NBRC 13350 / KCC S-0626 / ISP 5235).